The following is a 337-amino-acid chain: Holliday junction branch migration complex subunit RuvB (337 aa).

Positions Met1 to Tyr181 are large ATPase domain (RuvB-L). ATP is bound by residues Leu20, Arg21, Gly62, Lys65, Thr66, Thr67, Glu128–Phe130, Arg171, Tyr181, and Arg218. Mg(2+) is bound at residue Thr66. The segment at Ser182–Gly252 is small ATPAse domain (RuvB-S). The interval Ser255–Phe337 is head domain (RuvB-H). 2 residues coordinate DNA: Arg309 and Arg314.

It belongs to the RuvB family. As to quaternary structure, homohexamer. Forms an RuvA(8)-RuvB(12)-Holliday junction (HJ) complex. HJ DNA is sandwiched between 2 RuvA tetramers; dsDNA enters through RuvA and exits via RuvB. An RuvB hexamer assembles on each DNA strand where it exits the tetramer. Each RuvB hexamer is contacted by two RuvA subunits (via domain III) on 2 adjacent RuvB subunits; this complex drives branch migration. In the full resolvosome a probable DNA-RuvA(4)-RuvB(12)-RuvC(2) complex forms which resolves the HJ.

The protein localises to the cytoplasm. The catalysed reaction is ATP + H2O = ADP + phosphate + H(+). Functionally, the RuvA-RuvB-RuvC complex processes Holliday junction (HJ) DNA during genetic recombination and DNA repair, while the RuvA-RuvB complex plays an important role in the rescue of blocked DNA replication forks via replication fork reversal (RFR). RuvA specifically binds to HJ cruciform DNA, conferring on it an open structure. The RuvB hexamer acts as an ATP-dependent pump, pulling dsDNA into and through the RuvAB complex. RuvB forms 2 homohexamers on either side of HJ DNA bound by 1 or 2 RuvA tetramers; 4 subunits per hexamer contact DNA at a time. Coordinated motions by a converter formed by DNA-disengaged RuvB subunits stimulates ATP hydrolysis and nucleotide exchange. Immobilization of the converter enables RuvB to convert the ATP-contained energy into a lever motion, pulling 2 nucleotides of DNA out of the RuvA tetramer per ATP hydrolyzed, thus driving DNA branch migration. The RuvB motors rotate together with the DNA substrate, which together with the progressing nucleotide cycle form the mechanistic basis for DNA recombination by continuous HJ branch migration. Branch migration allows RuvC to scan DNA until it finds its consensus sequence, where it cleaves and resolves cruciform DNA. The chain is Holliday junction branch migration complex subunit RuvB from Sulfurimonas denitrificans (strain ATCC 33889 / DSM 1251) (Thiomicrospira denitrificans (strain ATCC 33889 / DSM 1251)).